Reading from the N-terminus, the 214-residue chain is ATP-dependent dethiobiotin synthetase BioD (214 aa).

Residue 10-15 participates in ATP binding; the sequence is GIGKTY. Residue Thr-14 coordinates Mg(2+). Lys-35 is a catalytic residue. Thr-39 serves as a coordination point for substrate. Residues Asp-44, 109–112, and 169–170 each bind ATP; these read EGAG and NC. Asp-44 and Glu-109 together coordinate Mg(2+).

It belongs to the dethiobiotin synthetase family. Homodimer. Mg(2+) serves as cofactor.

The protein localises to the cytoplasm. The enzyme catalyses (7R,8S)-7,8-diammoniononanoate + CO2 + ATP = (4R,5S)-dethiobiotin + ADP + phosphate + 3 H(+). The protein operates within cofactor biosynthesis; biotin biosynthesis; biotin from 7,8-diaminononanoate: step 1/2. Functionally, catalyzes a mechanistically unusual reaction, the ATP-dependent insertion of CO2 between the N7 and N8 nitrogen atoms of 7,8-diaminopelargonic acid (DAPA, also called 7,8-diammoniononanoate) to form a ureido ring. The sequence is that of ATP-dependent dethiobiotin synthetase BioD from Methanocaldococcus jannaschii (strain ATCC 43067 / DSM 2661 / JAL-1 / JCM 10045 / NBRC 100440) (Methanococcus jannaschii).